A 91-amino-acid polypeptide reads, in one-letter code: Small ribosomal subunit protein uS19 (91 aa).

It belongs to the universal ribosomal protein uS19 family.

Functionally, protein S19 forms a complex with S13 that binds strongly to the 16S ribosomal RNA. This chain is Small ribosomal subunit protein uS19, found in Opitutus terrae (strain DSM 11246 / JCM 15787 / PB90-1).